The sequence spans 346 residues: Arsenite methyltransferase (346 aa).

This sequence belongs to the methyltransferase superfamily. Arsenite methyltransferase family.

The catalysed reaction is arsenic triglutathione + [thioredoxin]-dithiol + S-adenosyl-L-methionine + 2 H2O = methylarsonous acid + [thioredoxin]-disulfide + 3 glutathione + S-adenosyl-L-homocysteine + H(+). It carries out the reaction arsenic triglutathione + 2 [thioredoxin]-dithiol + 2 S-adenosyl-L-methionine + H2O = dimethylarsinous acid + 2 [thioredoxin]-disulfide + 3 glutathione + 2 S-adenosyl-L-homocysteine + 2 H(+). The enzyme catalyses arsenic triglutathione + 3 [thioredoxin]-dithiol + 3 S-adenosyl-L-methionine = trimethylarsine + 3 [thioredoxin]-disulfide + 3 glutathione + 3 S-adenosyl-L-homocysteine + 3 H(+). Its function is as follows. Catalyzes the transfer of a methyl group from AdoMet to arsenite, producing methylated arsenicals. Involved in the conversion of As(III) to dimethylarsenate as the main product in the medium and also produces dimethylarsine and trimethylarsine gases. Reduces the arsenic toxicity in the cell and may contribute to the global arsenic cycling. This is Arsenite methyltransferase from Aquipseudomonas alcaligenes (strain ATCC 14909 / DSM 50342 / CCUG 1425 / JCM 20561 / NBRC 14159 / NCIMB 9945 / NCTC 10367 / 1577) (Pseudomonas alcaligenes).